A 527-amino-acid chain; its full sequence is NAD(P)H-quinone oxidoreductase chain 4 1 (527 aa).

The next 13 helical transmembrane spans lie at 6-26 (FPWLTAIILFPIVAALLVPII), 36-56 (WFALTVGLIDFALIIYAFYSS), 91-111 (LIILTGFITTLAILAAWPVTF), 113-133 (PKLFYFLMLLMYGGQIAVFAV), 136-156 (LLLFFLVWELELVPVYLILSI), 169-189 (FILYTAGGSLFILVAALTMAF), 212-232 (LFLYAGFLIAYGVKLPIFPLH), 243-263 (TAPAHMLLAGILLKMGGYALL), 275-295 (AVFAPVLVILGVVNIIYAALT), 306-326 (IAYSSISHMGFVLIGMASFTD), 331-351 (GAMLQMISHGLIGASLFFMVG), 387-407 (LALPGMSGFVAELMVFIGFAT), and 417-437 (VIIVFLAAIGVILTPIYLLSM).

This sequence belongs to the complex I subunit 4 family.

The protein localises to the cellular thylakoid membrane. The catalysed reaction is a plastoquinone + NADH + (n+1) H(+)(in) = a plastoquinol + NAD(+) + n H(+)(out). It carries out the reaction a plastoquinone + NADPH + (n+1) H(+)(in) = a plastoquinol + NADP(+) + n H(+)(out). In terms of biological role, NDH-1 shuttles electrons from NAD(P)H, via FMN and iron-sulfur (Fe-S) centers, to quinones in the respiratory chain. The immediate electron acceptor for the enzyme in this species is believed to be plastoquinone. Couples the redox reaction to proton translocation (for every two electrons transferred, four hydrogen ions are translocated across the cytoplasmic membrane), and thus conserves the redox energy in a proton gradient. This Microcystis aeruginosa (strain NIES-843 / IAM M-2473) protein is NAD(P)H-quinone oxidoreductase chain 4 1.